Consider the following 1827-residue polypeptide: Sucrase-isomaltase, intestinal (1827 aa).

The Cytoplasmic segment spans residues 2 to 12 (AKRKFSGLEIT). Position 7 is a phosphoserine; by PKA (S7). A helical; Signal-anchor for type II membrane protein membrane pass occupies residues 13–32 (LIVLFVIVFIIAIALIAVLA). The Lumenal segment spans residues 33-1827 (TKTPAVEEVN…LDDPIEISWS (1795 aa)). The interval 39–64 (EEVNPSSSTPTTTSTTTSTSGSVSCP) is disordered. A compositionally biased stretch (low complexity) spans 43–64 (PSSSTPTTTSTTTSTSGSVSCP). Residues 61-110 (VSCPSELNEVVNERINCIPEQSPTQAICAQRNCCWRPWNNSDIPWCFFVD) enclose the P-type 1 domain. 3 cysteine pairs are disulfide-bonded: C63–C94, C77–C93, and C88–C106. Residue N99 is glycosylated (N-linked (GlcNAc...) asparagine). Residues 110 to 1007 (DNHGYNVEGM…DLQLNPTRTR (898 aa)) are isomaltase. D264 and D388 together coordinate substrate. Residues Y391 and Y400 each carry the sulfotyrosine modification. A glycan (N-linked (GlcNAc...) asparagine) is linked at N455. D505 acts as the Nucleophile; for isomaltase activity in catalysis. An intrachain disulfide couples C520 to C545. R588 lines the substrate pocket. D604 functions as the For isomaltase activity in the catalytic mechanism. An intrachain disulfide couples C635 to C646. H662 serves as a coordination point for substrate. Residues N859, N896, and N904 are each glycosylated (N-linked (GlcNAc...) asparagine). The P-type 2 domain maps to 932-978 (DQTFLESEKITCYPDADIATQEKCTQRGCIWDTNTVNPRAPECYFPK). The interval 1008–1827 (ITLPSEPITN…LDDPIEISWS (820 aa)) is sucrase. N1235, N1303, N1325, N1340, N1354, and N1368 each carry an N-linked (GlcNAc...) asparagine glycan. Y1382 and Y1385 each carry sulfotyrosine. The active-site Nucleophile; for sucrase activity is D1394. E1397 serves as the catalytic For sucrase activity. N1403 carries an N-linked (GlcNAc...) asparagine glycan. The active-site Proton donor; for sucrase activity is the D1500. N-linked (GlcNAc...) asparagine glycans are attached at residues N1535, N1572, N1748, N1763, and N1799.

This sequence belongs to the glycosyl hydrolase 31 family. In terms of assembly, the resulting sucrase and isomaltase subunits stay associated with one another in a complex by non-covalent linkages. Post-translationally, the precursor is proteolytically cleaved when exposed to pancreatic proteases in the intestinal lumen. In terms of processing, N- and O-glycosylated. Sulfated.

It is found in the apical cell membrane. The enzyme catalyses Hydrolysis of sucrose and maltose by an alpha-D-glucosidase-type action.. It catalyses the reaction Hydrolysis of (1-&gt;6)-alpha-D-glucosidic linkages in some oligosaccharides produced from starch and glycogen by alpha-amylase, and in isomaltose.. Functionally, plays an important role in the final stage of carbohydrate digestion. Isomaltase activity is specific for both alpha-1,4- and alpha-1,6-oligosaccharides. The chain is Sucrase-isomaltase, intestinal (SI) from Oryctolagus cuniculus (Rabbit).